The sequence spans 256 residues: MNALREHWQALWTAVGYFTRIPVPASVGFSQAGLNRAARYFPLIGWLVGAVAAAVYWLVLRTVPAQGVAVAVSMGATLLLTGAFHEDGLADCADGFGGGYTPEDRLRIMHDSRIGAFGAIAVCMALLLKWQLLSAMAPHSIGILVAMVAAHAASRAAAVSHLLTHDYVRAEGKAKPVAQRMRWSDALWAGVFGVVPLLWFGPMCAALIVVGLILARWLLGRYFVRRIGGITGDCLGMAQQIFELLILWGLLAWMSS.

6 consecutive transmembrane segments (helical) span residues tyrosine 40–leucine 60, proline 64–phenylalanine 84, isoleucine 114–serine 134, isoleucine 143–leucine 163, valine 194–leucine 214, and cysteine 234–methionine 254.

This sequence belongs to the CobS family. Mg(2+) is required as a cofactor.

Its subcellular location is the cell inner membrane. The enzyme catalyses alpha-ribazole + adenosylcob(III)inamide-GDP = adenosylcob(III)alamin + GMP + H(+). It carries out the reaction alpha-ribazole 5'-phosphate + adenosylcob(III)inamide-GDP = adenosylcob(III)alamin 5'-phosphate + GMP + H(+). It functions in the pathway cofactor biosynthesis; adenosylcobalamin biosynthesis; adenosylcobalamin from cob(II)yrinate a,c-diamide: step 7/7. Functionally, joins adenosylcobinamide-GDP and alpha-ribazole to generate adenosylcobalamin (Ado-cobalamin). Also synthesizes adenosylcobalamin 5'-phosphate from adenosylcobinamide-GDP and alpha-ribazole 5'-phosphate. This is Adenosylcobinamide-GDP ribazoletransferase from Ralstonia pickettii (strain 12J).